Consider the following 432-residue polypeptide: Enolase 2 (432 aa).

Residue Gln-163 coordinates (2R)-2-phosphoglycerate. The Proton donor role is filled by Glu-205. The Mg(2+) site is built by Asp-242, Glu-287, and Asp-314. 4 residues coordinate (2R)-2-phosphoglycerate: Lys-339, Arg-368, Ser-369, and Lys-390. Residue Lys-339 is the Proton acceptor of the active site.

It belongs to the enolase family. Homodimer. Probably forms octamers. Mg(2+) serves as cofactor.

It is found in the cytoplasm. Its subcellular location is the secreted. It localises to the cell surface. The enzyme catalyses (2R)-2-phosphoglycerate = phosphoenolpyruvate + H2O. It participates in carbohydrate degradation; glycolysis; pyruvate from D-glyceraldehyde 3-phosphate: step 4/5. Its function is as follows. Catalyzes the reversible conversion of 2-phosphoglycerate (2-PG) into phosphoenolpyruvate (PEP). It is essential for the degradation of carbohydrates via glycolysis. This is Enolase 2 from Lactobacillus gasseri (strain ATCC 33323 / DSM 20243 / BCRC 14619 / CIP 102991 / JCM 1131 / KCTC 3163 / NCIMB 11718 / NCTC 13722 / AM63).